Consider the following 187-residue polypeptide: Threonylcarbamoyl-AMP synthase (187 aa).

The YrdC-like domain occupies 4–187 (QSTIAAAITC…DAMNGKVFRG (184 aa)).

The protein belongs to the SUA5 family. TsaC subfamily.

The protein localises to the cytoplasm. The catalysed reaction is L-threonine + hydrogencarbonate + ATP = L-threonylcarbamoyladenylate + diphosphate + H2O. In terms of biological role, required for the formation of a threonylcarbamoyl group on adenosine at position 37 (t(6)A37) in tRNAs that read codons beginning with adenine. Catalyzes the conversion of L-threonine, HCO(3)(-)/CO(2) and ATP to give threonylcarbamoyl-AMP (TC-AMP) as the acyladenylate intermediate, with the release of diphosphate. The protein is Threonylcarbamoyl-AMP synthase of Pseudoalteromonas translucida (strain TAC 125).